Here is a 614-residue protein sequence, read N- to C-terminus: Pentatricopeptide repeat-containing protein At1g63080, mitochondrial (614 aa).

The transit peptide at 1–7 directs the protein to the mitochondrion; the sequence is MSLAKRF. 15 PPR repeats span residues 64–98, 99–133, 134–168, 169–203, 204–238, 239–273, 274–308, 309–343, 344–378, 379–413, 414–448, 449–483, 484–518, 519–553, and 554–588; these read SIVE…GVSH, NLYT…GYGP, SIVT…GYQP, DTVT…GCQP, DLVT…KIEA, DVVI…GIRP, DVFT…KINP, NVVT…SIDP, NIVT…DCLP, DVVT…GLVG, NTVT…GVHP, NIMT…KMEP, DIYT…GVKP, DVIA…GPLP, and DSGT…RFAG.

The protein belongs to the PPR family. P subfamily.

The protein resides in the mitochondrion. The sequence is that of Pentatricopeptide repeat-containing protein At1g63080, mitochondrial from Arabidopsis thaliana (Mouse-ear cress).